The sequence spans 143 residues: Submaxillary gland androgen-regulated protein 2, isoform gamma (143 aa).

Residues 1–22 (MKALYMVFVLWVLIGCFLSSEC) form the signal peptide. The interval 28–50 (GQHDPTRPLSPSNPSSHFYPQPD) is disordered. A compositionally biased stretch (polar residues) spans 36–45 (LSPSNPSSHF).

It is found in the secreted. In terms of biological role, may play a role in protection or detoxification. In Mus musculus (Mouse), this protein is Submaxillary gland androgen-regulated protein 2, isoform gamma (Smr2).